A 120-amino-acid polypeptide reads, in one-letter code: MLKFTESGLEGVKAELSWLDDLMESKGLIRAGQWDYERVTYDKKFSTIEGTFYLRIQGIAAEGDVGSGRAVIQLMSPLLGKHYYPHGVEYGETEEFPVQVVTKSKALIQDIANMLKTVQM.

This is an uncharacterized protein from Bacillus subtilis (strain 168).